The following is an 89-amino-acid chain: Small ribosomal subunit protein uS15 (89 aa).

It belongs to the universal ribosomal protein uS15 family. As to quaternary structure, part of the 30S ribosomal subunit. Forms a bridge to the 50S subunit in the 70S ribosome, contacting the 23S rRNA.

Functionally, one of the primary rRNA binding proteins, it binds directly to 16S rRNA where it helps nucleate assembly of the platform of the 30S subunit by binding and bridging several RNA helices of the 16S rRNA. Its function is as follows. Forms an intersubunit bridge (bridge B4) with the 23S rRNA of the 50S subunit in the ribosome. The chain is Small ribosomal subunit protein uS15 from Azoarcus sp. (strain BH72).